A 296-amino-acid polypeptide reads, in one-letter code: Killer toxin KHR (296 aa).

An N-terminal signal peptide occupies residues 1-20; that stretch reads MGHLAILFSIIAVLNIATAV. N-linked (GlcNAc...) asparagine glycans are attached at residues Asn46, Asn71, Asn122, and Asn146.

This sequence to yeast YER076C.

Functionally, kills sensitive strains of yeast. The polypeptide is Killer toxin KHR (KHR1) (Saccharomyces cerevisiae (Baker's yeast)).